The following is a 247-amino-acid chain: 6-phosphogluconolactonase (247 aa).

This sequence belongs to the glucosamine/galactosamine-6-phosphate isomerase family. 6-phosphogluconolactonase subfamily.

It carries out the reaction 6-phospho-D-glucono-1,5-lactone + H2O = 6-phospho-D-gluconate + H(+). Its pathway is carbohydrate degradation; pentose phosphate pathway; D-ribulose 5-phosphate from D-glucose 6-phosphate (oxidative stage): step 2/3. Functionally, hydrolysis of 6-phosphogluconolactone to 6-phosphogluconate. This Mycobacterium leprae (strain TN) protein is 6-phosphogluconolactonase (pgl).